Consider the following 308-residue polypeptide: Glycine-rich protein GRP33 (308 aa).

One can recognise a KH domain in the interval 83 to 118 (DQFPKYNFLGKLLGPGGSTMKQLQDETMTKISILGR). Gly residues-rich tracts occupy residues 203-220 (GPMG…GGFS) and 273-294 (RGAG…GGGK). Disordered regions lie at residues 203–222 (GPMG…FSGP) and 270–308 (SPGR…AAPY).

The arginines in the Gly-rich domain might be methylated.

This Artemia salina (Brine shrimp) protein is Glycine-rich protein GRP33.